Reading from the N-terminus, the 355-residue chain is Peptide chain release factor 1 (355 aa).

Glutamine 231 is subject to N5-methylglutamine. Over residues 280–293 (KERKAKEQSERKDQ) the composition is skewed to basic and acidic residues. Residues 280 to 307 (KERKAKEQSERKDQVGTGDRSGRIRTYN) form a disordered region.

Belongs to the prokaryotic/mitochondrial release factor family. In terms of processing, methylated by PrmC. Methylation increases the termination efficiency of RF1.

The protein resides in the cytoplasm. Its function is as follows. Peptide chain release factor 1 directs the termination of translation in response to the peptide chain termination codons UAG and UAA. This Campylobacter hominis (strain ATCC BAA-381 / DSM 21671 / CCUG 45161 / LMG 19568 / NCTC 13146 / CH001A) protein is Peptide chain release factor 1.